Here is a 239-residue protein sequence, read N- to C-terminus: MKGFIAYIPAGFPDLETTRKILIALNELGITGVEIGVPFSDPVADGPVIQLAHSVALRNGVTMKKILEMLGEISVDYDLYLMSYLNPIVNYPEGKEKLLDELKKLGVKGLIIPDLPLREVKNVNIAYPIVPFVAPNTKDEEIEFINSVQAPFVYYISRYGVTGEREDLPFADHIKRVKERIKLPLFVGFGISRHEQVEKVWEIADGAIVGSALVRIMEESPKDEIPKKVVEKVKELLGK.

Catalysis depends on proton acceptor residues glutamate 34 and aspartate 45.

This sequence belongs to the TrpA family. Tetramer of two alpha and two beta chains.

The enzyme catalyses (1S,2R)-1-C-(indol-3-yl)glycerol 3-phosphate + L-serine = D-glyceraldehyde 3-phosphate + L-tryptophan + H2O. It functions in the pathway amino-acid biosynthesis; L-tryptophan biosynthesis; L-tryptophan from chorismate: step 5/5. Its function is as follows. The alpha subunit is responsible for the aldol cleavage of indoleglycerol phosphate to indole and glyceraldehyde 3-phosphate. The sequence is that of Tryptophan synthase alpha chain from Thermotoga petrophila (strain ATCC BAA-488 / DSM 13995 / JCM 10881 / RKU-1).